The sequence spans 457 residues: Adenylyltransferase and sulfurtransferase MOCS3 (457 aa).

The segment at 40–60 (ANGGGNGDGLADEGGERNTGT) is disordered. Thr63 is modified (phosphothreonine). ATP contacts are provided by residues Gly102, Asp123, 130-134 (SNFHR), Lys147, and 191-192 (DN). 2 residues coordinate Zn(2+): Cys233 and Cys236. Residue Cys250 is the Glycyl thioester intermediate; for adenylyltransferase activity of the active site. Zn(2+) is bound by residues Cys309 and Cys312. A Rhodanese domain is found at 358 to 455 (ESQPHLLFDV…WTRKVDPDFP (98 aa)). The active-site Cysteine persulfide intermediate; for sulfurtransferase activity is Cys414.

This sequence in the N-terminal section; belongs to the HesA/MoeB/ThiF family. UBA4 subfamily. Zn(2+) is required as a cofactor.

It is found in the cytoplasm. The protein resides in the cytosol. It carries out the reaction [molybdopterin-synthase sulfur-carrier protein]-C-terminal Gly-Gly + ATP + H(+) = [molybdopterin-synthase sulfur-carrier protein]-C-terminal Gly-Gly-AMP + diphosphate. It catalyses the reaction [molybdopterin-synthase sulfur-carrier protein]-C-terminal Gly-Gly-AMP + S-sulfanyl-L-cysteinyl-[cysteine desulfurase] + AH2 = [molybdopterin-synthase sulfur-carrier protein]-C-terminal-Gly-aminoethanethioate + L-cysteinyl-[cysteine desulfurase] + A + AMP + 2 H(+). Its pathway is tRNA modification; 5-methoxycarbonylmethyl-2-thiouridine-tRNA biosynthesis. The protein operates within cofactor biosynthesis; molybdopterin biosynthesis. In terms of biological role, plays a central role in 2-thiolation of mcm(5)S(2)U at tRNA wobble positions of cytosolic tRNA(Lys), tRNA(Glu) and tRNA(Gln). Also essential during biosynthesis of the molybdenum cofactor. Acts by mediating the C-terminal thiocarboxylation of sulfur carriers URM1 and MOCS2A. Its N-terminus first activates URM1 and MOCS2A as acyl-adenylates (-COAMP), then the persulfide sulfur on the catalytic cysteine is transferred to URM1 and MOCS2A to form thiocarboxylation (-COSH) of their C-terminus. The reaction probably involves hydrogen sulfide that is generated from the persulfide intermediate and that acts as a nucleophile towards URM1 and MOCS2A. Subsequently, a transient disulfide bond is formed. Does not use thiosulfate as sulfur donor; NFS1 probably acting as a sulfur donor for thiocarboxylation reactions. The sequence is that of Adenylyltransferase and sulfurtransferase MOCS3 from Drosophila willistoni (Fruit fly).